The chain runs to 1758 residues: RanBP2-like and GRIP domain-containing protein 3 (1758 aa).

Ser-21 is modified (phosphoserine). The stretch at 60–93 is one TPR 1 repeat; it reads PRAHRFLGLLYELEENTEKAVECYRRSVELNPTQ. A coiled-coil region spans residues 176 to 229; the sequence is RSTKRLKDAVARCHEAERNIALRSSLEWNSCVVQTLKEYLESLQCLESDKSDWR. Residues 584–617 form a TPR 2 repeat; that stretch reads QKMGSGLNSFYDQREYIGRSVHYWKKVLPLLKII. A disordered region spans residues 761-805; it reads GPLYKNGSLRNADSEIKHSTPSPTKYSLSPSKSYKYSPKTPPRWA. A compositionally biased stretch (low complexity) spans 779–798; that stretch reads STPSPTKYSLSPSKSYKYSP. Residues 805–837 are a coiled coil; the sequence is AEDQNSLLKMIRQEVKAIKEEMQELKLNSSKSA. Residues 1037-1173 form the RanBD1 1 domain; sequence HFEPVVQMPE…FEECQRLLLD (137 aa). Disordered stretches follow at residues 1216–1248, 1307–1335, and 1581–1622; these read VAEEENKGSGTGAAGASDTTIKPNAENTGPTLE, AKLNQSGTSVGTDEESDVTQEEERDGQYF, and NNSE…KNLS. Polar residues predominate over residues 1236–1245; sequence IKPNAENTGP. Residues 1318-1330 are compositionally biased toward acidic residues; that stretch reads TDEESDVTQEEER. The 137-residue stretch at 1334 to 1470 folds into the RanBD1 2 domain; sequence YFEPVVPLPD…FDEAKTAQEK (137 aa). A compositionally biased stretch (polar residues) spans 1581–1594; that stretch reads NNSETSSVAQSGSE. Residues 1595–1618 are compositionally biased toward basic and acidic residues; the sequence is SKVEPKKCELSKNSDIEQSSDSKV. A GRIP domain is found at 1703–1753; it reads QEVSAANVEHLKNVLLQFIFLKPGSERERLLPVINTMLQLSLEEKGKLAAV.

The sequence is that of RanBP2-like and GRIP domain-containing protein 3 (RGPD3) from Homo sapiens (Human).